The chain runs to 261 residues: 5'-nucleotidase SurE (261 aa).

D10, D11, S41, and N96 together coordinate a divalent metal cation.

It belongs to the SurE nucleotidase family. A divalent metal cation is required as a cofactor.

It is found in the cytoplasm. The enzyme catalyses a ribonucleoside 5'-phosphate + H2O = a ribonucleoside + phosphate. Functionally, nucleotidase that shows phosphatase activity on nucleoside 5'-monophosphates. The sequence is that of 5'-nucleotidase SurE from Methanococcoides burtonii (strain DSM 6242 / NBRC 107633 / OCM 468 / ACE-M).